We begin with the raw amino-acid sequence, 123 residues long: Testis-expressed protein 12 (123 aa).

Residues 1 to 41 (MMANHLVKPDSRNCKRARELEPQVSDSPQVSSLGKSESSLS) form a disordered region. The span at 7–21 (VKPDSRNCKRARELE) shows a compositional bias: basic and acidic residues. Positions 31–41 (SSLGKSESSLS) are enriched in low complexity.

In terms of assembly, interacts with SYCE2. Testis (at protein level). Detected in ovary. Expressed in both male and female germ cells.

It localises to the chromosome. Functionally, component of the transverse central element of synaptonemal complexes (SCS), formed between homologous chromosomes during meiotic prophase. Requires SYCP1 in order to be incorporated into the central element. The chain is Testis-expressed protein 12 (Tex12) from Mus musculus (Mouse).